The chain runs to 219 residues: Transmembrane emp24 domain-containing protein 10 (219 aa).

Residues 1–31 form the signal peptide; the sequence is MSGLSGPPARRGPFPLALLLLFLLGPRLVLA. A required for interaction with STX17 region spans residues 1-142; it reads MSGLSGPPAR…KNYEEIAKVE (142 aa). The Lumenal segment spans residues 32-185; the sequence is ISFHLPINSR…RDTNESTNTR (154 aa). The GOLD domain occupies 41–193; that stretch reads RKCLREEIHK…TRVLYFSIFS (153 aa). Positions 147–178 are required for TMED10 and TMED2 cis-Golgi network localization; that stretch reads LEVELRRLEDLSESIVNDFAYMKKREEEMRDT. Dimethylated arginine is present on residues arginine 171 and arginine 176. An N-linked (GlcNAc...) asparagine glycan is attached at asparagine 179. Residues 186-206 form a helical membrane-spanning segment; the sequence is VLYFSIFSMFCLIGLATWQVF. Positions 204–219 are interaction with COPG1; sequence QVFYLRRFFKAKKLIE. The Cytoplasmic portion of the chain corresponds to 207–219; that stretch reads YLRRFFKAKKLIE. An interaction with ARF1 and IL1B region spans residues 207–219; that stretch reads YLRRFFKAKKLIE. Residues 211-212 carry the COPII vesicle coat-binding motif; it reads FF. The COPI vesicle coat-binding motif lies at 211 to 219; the sequence is FFKAKKLIE.

This sequence belongs to the EMP24/GP25L family. In terms of assembly, predominantly dimeric and to a lesser extent monomeric in the ER. Monomer and dimer in ERGIC and cis-Golgi network. Forms homooligomer (via GOLD domain); the assembly is promoted by direct binding with leaderless cargos and may form a protein channel that facilitates cargo entry into the ERGIC. Forms heterooligomeric complexes with other members of the p24 family such as TMED2, TMED7 and TMED9. Interacts (via GOLD domain) with TMED2 (via GOLD domain); the complex is required for export of TMED10 from the ER to the cis-Golgi network; the complex is proposed to be involved in cis-Golgi network dynamics and / or biogenesis. Associates with the COPI vesicle coat subunits (coatomer). Tetramerization of the cytoplasmic domain at the Golgi membrane in vitro; the complex is proposed to interact with COPI coatomer and induce budding of the vesicles. Interacts with COPG1; the interaction involves TMED10 homodimer. Interacts with ARF1 (GDP-bound); the interaction probably involves a TMED10 oligomer. Interacts with SEC23A, SEC24B, SEC24C and SEC24D components of the coat protein complex II/COPII, indicative of an association of TMED10 with the COPII vesicle coat. Interacts with CD59. Interacts with MPPE1/PGAP5; the complex might recruit and sort GPI-anchored proteins to the ER-exit site, or the interaction might lead to recycling of PGAP5 between the ER and the Golgi. Interacts with F2LR1/PAR2. Interacts with KDELR2/ERD2; the interaction is disrupted by KDELR2 ligand. Found in a complex composed at least of SURF4, TMED2 and TMED10. Associates with the presenilin-dependent gamma-secretase complex. Interacts with STX17; the interaction is direct. Interacts with IL-1; the interaction is direct. Interacts with RAB21 (active GTP-bound form); the interaction is indirect and regulates TMED10 abundance and localization at the Golgi.

The protein localises to the endoplasmic reticulum membrane. The protein resides in the endoplasmic reticulum-Golgi intermediate compartment membrane. It localises to the golgi apparatus membrane. Its subcellular location is the golgi apparatus. It is found in the cis-Golgi network membrane. The protein localises to the trans-Golgi network membrane. The protein resides in the cytoplasmic vesicle. It localises to the secretory vesicle membrane. Its subcellular location is the cell membrane. It is found in the melanosome. Its function is as follows. Cargo receptor involved in protein vesicular trafficking and quality control in the endoplasmic reticulum (ER) and Golgi. The p24 protein family is a group of transmembrane proteins that bind coat protein complex I/COPI and coat protein complex II/COPII involved in vesicular trafficking between the membranes. Acts at the lumenal side for incorporation of secretory cargo molecules into transport vesicles and involved in vesicle coat formation at the cytoplasmic side. Mainly functions in the early secretory pathway and cycles between the ER, ER-Golgi intermediate compartment (ERGIC) and Golgi, mediating cargo transport through COPI and COPII-coated vesicles. In COPII vesicle-mediated anterograde transport, involved in the transport of GPI-anchored proteins by acting together with TMED2 as their cargo receptor; the function specifically implies SEC24C and SEC24D of the COPII vesicle coat and lipid raft-like microdomains of the ER. Recognizes GPI anchors structural remodeled in the ER by the GPI inositol-deacylase/PGAP1 and the metallophosphoesterase MPPE1/PGAP5. In COPI vesicle-mediated retrograde transport, involved in the biogenesis of COPI vesicles and vesicle coat recruitment. Involved in trafficking of amyloid beta A4 protein and soluble APP-beta release (independent from the modulation of gamma-secretase activity). Involved in the KDELR2-mediated retrograde transport of the toxin A subunit (CTX-A-K63)together with COPI and the COOH terminus of KDELR2. On Golgi membranes, acts as a primary receptor for ARF1-GDP, a GTP-binding protein involved in COPI-vesicle formation. Increases coatomer-dependent GTPase-activating activity of ARFGAP2 which mediates the hydrolysis of ARF1-bound GTP and therefore modulates protein trafficking from the Golgi apparatus. Involved in the exocytic trafficking of G protein-coupled receptors F2LR1/PAR2 (trypsin and tryspin-like enzyme receptor), OPRM1 (opioid receptor) and P2RY4 (UTD and UDP receptor) from the Golgi to the plasma membrane, thus contributing to receptor resensitization. In addition to its cargo receptor activity, may also act as a protein channel after oligomerization, facilitating the post-translational entry of leaderless cytoplasmic cargo into the ERGIC. Involved in the translocation into ERGIC, the vesicle entry and the secretion of leaderless cargos (lacking the secretion signal sequence), including the mature form of interleukin 1/IL-1 family members, the alpha-crystallin B chain HSPB5, the carbohydrate-binding proteins galectin-1/LGALS1 and galectin-3/LGALS3, the microtubule-associated protein Tau/MAPT, and the annexin A1/ANXA1; the translocation process is dependent on cargo protein unfolding and enhanced by chaperones HSP90AB1 and HSP90B1/GRP9. Could also associates with the presenilin-dependent gamma-secretase complex in order to regulate gamma-cleavages of the amyloid beta A4 protein to yield amyloid-beta 40/Abeta40. This chain is Transmembrane emp24 domain-containing protein 10, found in Homo sapiens (Human).